Reading from the N-terminus, the 171-residue chain is Small ribosomal subunit protein uS5 (171 aa).

The S5 DRBM domain maps to 12-75; the sequence is LKEKLISVNR…EKARRNMIQV (64 aa).

This sequence belongs to the universal ribosomal protein uS5 family. Part of the 30S ribosomal subunit. Contacts proteins S4 and S8.

In terms of biological role, with S4 and S12 plays an important role in translational accuracy. Located at the back of the 30S subunit body where it stabilizes the conformation of the head with respect to the body. The polypeptide is Small ribosomal subunit protein uS5 (Buchnera aphidicola subsp. Baizongia pistaciae (strain Bp)).